The chain runs to 71 residues: uncharacterized protein (71 aa).

The protein resides in the plastid. It localises to the chloroplast. This is an uncharacterized protein from Mesostigma viride (Green alga).